Reading from the N-terminus, the 269-residue chain is Putative ABC transporter ATP-binding protein PF0528 (269 aa).

The ABC transporter domain occupies Ile-6 to Val-237. An ATP-binding site is contributed by Gly-39–Ser-46.

This sequence belongs to the ABC transporter superfamily.

It localises to the cell membrane. In terms of biological role, probably part of an ABC transporter complex. Responsible for energy coupling to the transport system. The chain is Putative ABC transporter ATP-binding protein PF0528 from Pyrococcus furiosus (strain ATCC 43587 / DSM 3638 / JCM 8422 / Vc1).